Reading from the N-terminus, the 1179-residue chain is DNA-directed RNA polymerase subunit beta (1179 aa).

Belongs to the RNA polymerase beta chain family. In terms of assembly, the RNAP catalytic core consists of 2 alpha, 1 beta, 1 beta' and 1 omega subunit. When a sigma factor is associated with the core the holoenzyme is formed, which can initiate transcription.

It catalyses the reaction RNA(n) + a ribonucleoside 5'-triphosphate = RNA(n+1) + diphosphate. Functionally, DNA-dependent RNA polymerase catalyzes the transcription of DNA into RNA using the four ribonucleoside triphosphates as substrates. This chain is DNA-directed RNA polymerase subunit beta, found in Oceanobacillus iheyensis (strain DSM 14371 / CIP 107618 / JCM 11309 / KCTC 3954 / HTE831).